We begin with the raw amino-acid sequence, 208 residues long: TM2 domain-containing protein 1 (208 aa).

The first 37 residues, 1-37 (MAAAWPAGRASPAAGPPGLLRTLWLVTVAAGHCGAAA), serve as a signal peptide directing secretion. At 38–129 (SGAVGGEETP…YSYKVAVALS (92 aa)) the chain is on the extracellular side. N-linked (GlcNAc...) asparagine glycosylation is found at Asn73, Asn76, and Asn97. The TM2 domain maps to 119–167 (GYSYKVAVALSLFLGWLGADRFYLGYPALGLLKFCTVGFCGIGSLIDFI). Residues 130–150 (LFLGWLGADRFYLGYPALGLL) form a helical membrane-spanning segment. Residues 151-154 (KFCT) are Cytoplasmic-facing. Residues 155 to 175 (VGFCGIGSLIDFILISMQIVG) form a helical membrane-spanning segment. Residues 176 to 208 (PSDGSSYIIDYYGTRLTRLSITNETFRKTQLYP) are Extracellular-facing. Asn198 carries an N-linked (GlcNAc...) asparagine glycan.

It belongs to the TM2 family. In terms of assembly, interacts with APP beta-APP42 (amyloid-beta protein 42). In terms of processing, N-glycosylated.

The protein resides in the membrane. Functionally, may participate in amyloid-beta-induced apoptosis via its interaction with beta-APP42. The chain is TM2 domain-containing protein 1 (Tm2d1) from Mus musculus (Mouse).